Consider the following 159-residue polypeptide: Large ribosomal subunit protein mL43 (159 aa).

A disordered region spans residues 123-159; it reads SPSIQGQWHPFTNKPTALGGLRPREVQNPAPTQRPAQ.

It belongs to the mitochondrion-specific ribosomal protein mL43 family. In terms of assembly, component of the mitochondrial ribosome large subunit (39S) which comprises a 16S rRNA and about 50 distinct proteins.

The protein resides in the mitochondrion. The polypeptide is Large ribosomal subunit protein mL43 (MRPL43) (Bos taurus (Bovine)).